The primary structure comprises 265 residues: MDYKEEQKQELEVLESIYPDELRIINDEYPKIKFEVAIKLELDTGDSTSVLTKEHTIIAEFKLPENYPDEPCLISLEAQEVALNDNEEDNEEDEDEVEYDDHGNKVLKKFENLPDLISFKGYLPELTVQLESQIETDMLLGMQMCFALISSIKERCEQWYSEQLNKLEKQYELEAQEREKKEQAKFHGTKVTRESYLEWRSKFRQELKLDERDQVRRMKAHHGKLTGKQMFEQGVVGTGDEYMEEDDASVDDVAKGLAKTEIANQ.

The RWD domain occupies 9–159 (QELEVLESIY…SSIKERCEQW (151 aa)).

The protein belongs to the RWDD1/GIR2 family. Interacts with GCN1; this interaction prevents the interaction of GCN1 with GCN2 protein kinase and GCN2 activation in amino acid-starved cells. Interacts with RBG1. Associates with ribosomes; the association occurs in a GCN1-dependent manner.

In terms of biological role, acts as a negative regulator of the GCN2 kinase activity by disrupting the GCN1-GCN2 interaction in amino acid-starved cells. The protein is Protein GIR2 (GIR2) of Saccharomyces cerevisiae (strain ATCC 204508 / S288c) (Baker's yeast).